Consider the following 497-residue polypeptide: Vacuolar-processing enzyme beta-isozyme 1 (497 aa).

Positions 1-23 (MAARCWVWGFVVALLAVAAAADG) are cleaved as a signal peptide. Residue Asn153 is glycosylated (N-linked (GlcNAc...) asparagine). The active site involves His180. The Nucleophile role is filled by Cys222. A disulfide bridge links Cys255 with Cys269. The N-linked (GlcNAc...) asparagine glycan is linked to Asn340. Disulfide bonds link Cys432-Cys462 and Cys444-Cys479.

The protein belongs to the peptidase C13 family. Auto-catalytic activation. Expressed in developing seeds.

The protein resides in the protein storage vacuole. It carries out the reaction Hydrolysis of proteins and small molecule substrates at -Asn-|-Xaa- bonds.. Its function is as follows. Asparagine-specific endopeptidase that may be involved in processing of proteins targeted to vacuoles. Cysteine protease required for post-translational proteolysis of seed storage proteins in the protein storage vacuole (PSV) of developing seeds, by processing of proglutelin precursor to mature glutelin subunits, thus contributing to the formation of protein crystalline structures in PSV. This Oryza sativa subsp. japonica (Rice) protein is Vacuolar-processing enzyme beta-isozyme 1.